A 521-amino-acid polypeptide reads, in one-letter code: FAD-dependent monooxygenase mdpD (521 aa).

A disordered region spans residues 1–48 (MTHFPVNIASDKQEFDPERWAKTPTTESSVNGENGTAPTSGLPSRHPS). Over residues 11 to 21 (DKQEFDPERWA) the composition is skewed to basic and acidic residues. Over residues 23–48 (TPTTESSVNGENGTAPTSGLPSRHPS) the composition is skewed to polar residues. 2 residues coordinate FAD: Val94 and Arg160. Residues Arg244 and Tyr271 contribute to the active site. 2 residues coordinate FAD: Asp369 and Gly382.

Belongs to the paxM FAD-dependent monooxygenase family. Requires FAD as cofactor.

The protein operates within secondary metabolite biosynthesis. FAD-dependent monooxygenase; part of the gene cluster that mediates the biosynthesis of monodictyphenone, a prenyl xanthone derivative. The pathway begins with the synthesis of atrochrysone thioester by the polyketide synthase (PKS) mdpG. The atrochrysone carboxyl ACP thioesterase mdpF then breaks the thioester bond and releases the atrochrysone carboxylic acid from mdpG. The atrochrysone carboxylic acid is then converted to atrochrysone which is further transformed into emodin anthrone. The next step is performed by the anthrone oxygenase mdpH that catalyzes the oxidation of emodinanthrone to emodin. Emodin is further modified to yield monodictyphenone via several steps involving mdpB, mdpC mdpJ, mdpK and mdpL. These enzymes with xptA, xptB and xptC are also proposed to be involved in the synthesis of shamixanthone from emodin. Especially, direct reduction of emodin by the short chain dehydrogenase mdpC followed by dehydration catalyzed by the scytalone dehydratase-like protein mdpB gives loss of oxygen and formation of chrysophanol intermediate in two simple steps. In Emericella nidulans (strain FGSC A4 / ATCC 38163 / CBS 112.46 / NRRL 194 / M139) (Aspergillus nidulans), this protein is FAD-dependent monooxygenase mdpD.